The sequence spans 292 residues: Glycine--tRNA ligase alpha subunit (292 aa).

Belongs to the class-II aminoacyl-tRNA synthetase family. As to quaternary structure, tetramer of two alpha and two beta subunits.

It localises to the cytoplasm. It catalyses the reaction tRNA(Gly) + glycine + ATP = glycyl-tRNA(Gly) + AMP + diphosphate. The polypeptide is Glycine--tRNA ligase alpha subunit (Pelobacter propionicus (strain DSM 2379 / NBRC 103807 / OttBd1)).